A 139-amino-acid polypeptide reads, in one-letter code: Nucleoside diphosphate kinase (139 aa).

Positions 10, 58, 86, 92, 103, and 113 each coordinate ATP. The Pros-phosphohistidine intermediate role is filled by histidine 116.

Belongs to the NDK family. In terms of assembly, homotetramer. Mg(2+) serves as cofactor.

The protein localises to the cytoplasm. It carries out the reaction a 2'-deoxyribonucleoside 5'-diphosphate + ATP = a 2'-deoxyribonucleoside 5'-triphosphate + ADP. It catalyses the reaction a ribonucleoside 5'-diphosphate + ATP = a ribonucleoside 5'-triphosphate + ADP. Functionally, major role in the synthesis of nucleoside triphosphates other than ATP. The ATP gamma phosphate is transferred to the NDP beta phosphate via a ping-pong mechanism, using a phosphorylated active-site intermediate. In Nitratidesulfovibrio vulgaris (strain DSM 19637 / Miyazaki F) (Desulfovibrio vulgaris), this protein is Nucleoside diphosphate kinase.